The chain runs to 109 residues: SIAFSRAVFSEFLATLLFVFFGLGSALNWPQALPSVLQIAMAFGLAIGTLVQTLGHISGAHINPAVTVACLVGCHVSFLRATFYVAAQLLGAVAGAALLHELTPPDIRG.

Over 1–6 (SIAFSR) the chain is Cytoplasmic. A helical membrane pass occupies residues 7–27 (AVFSEFLATLLFVFFGLGSAL). The Extracellular portion of the chain corresponds to 28–35 (NWPQALPS). Residues 36-54 (VLQIAMAFGLAIGTLVQTL) traverse the membrane as a helical segment. Topologically, residues 55-59 (GHISG) are cytoplasmic. The segment at residues 60–69 (AHINPAVTVA) is an intramembrane region (discontinuously helical). The short motif at 63-65 (NPA) is the NPA 1 element. The Cytoplasmic segment spans residues 70-80 (CLVGCHVSFLR). Residues 81–102 (ATFYVAAQLLGAVAGAALLHEL) traverse the membrane as a helical segment. Residues 103–109 (TPPDIRG) are Extracellular-facing.

It belongs to the MIP/aquaporin (TC 1.A.8) family. As to quaternary structure, homotetramer. Serine phosphorylation is necessary and sufficient for expression at the apical membrane. Endocytosis is not phosphorylation-dependent. In terms of processing, N-glycosylated.

It is found in the apical cell membrane. The protein resides in the basolateral cell membrane. It localises to the cell membrane. The protein localises to the cytoplasmic vesicle membrane. Its subcellular location is the golgi apparatus. It is found in the trans-Golgi network membrane. The enzyme catalyses H2O(in) = H2O(out). It carries out the reaction glycerol(in) = glycerol(out). In terms of biological role, forms a water-specific channel that provides the plasma membranes of renal collecting duct with high permeability to water, thereby permitting water to move in the direction of an osmotic gradient. Plays an essential role in renal water homeostasis. Could also be permeable to glycerol. In Amblysomus hottentotus (Hottentot golden mole), this protein is Aquaporin-2.